The following is a 303-amino-acid chain: Methionyl-tRNA formyltransferase (303 aa).

108-111 lines the (6S)-5,6,7,8-tetrahydrofolate pocket; that stretch reads SDLP.

It belongs to the Fmt family.

It catalyses the reaction L-methionyl-tRNA(fMet) + (6R)-10-formyltetrahydrofolate = N-formyl-L-methionyl-tRNA(fMet) + (6S)-5,6,7,8-tetrahydrofolate + H(+). Its function is as follows. Attaches a formyl group to the free amino group of methionyl-tRNA(fMet). The formyl group appears to play a dual role in the initiator identity of N-formylmethionyl-tRNA by promoting its recognition by IF2 and preventing the misappropriation of this tRNA by the elongation apparatus. This Rickettsia canadensis (strain McKiel) protein is Methionyl-tRNA formyltransferase.